The sequence spans 349 residues: Glycerol-3-phosphate dehydrogenase [NAD(+)], cytoplasmic (349 aa).

10 to 15 (GSGNWG) contacts NAD(+). K120 serves as a coordination point for substrate. Position 153 (A153) interacts with NAD(+). K204 acts as the Proton acceptor in catalysis. Residue R269 participates in NAD(+) binding. Residue 269–270 (RN) participates in substrate binding. N6-succinyllysine is present on K289. Residues K296 and Q298 each contribute to the NAD(+) site. Y326 carries the post-translational modification Phosphotyrosine.

The protein belongs to the NAD-dependent glycerol-3-phosphate dehydrogenase family. Homodimer.

It is found in the cytoplasm. The catalysed reaction is sn-glycerol 3-phosphate + NAD(+) = dihydroxyacetone phosphate + NADH + H(+). Functionally, has glycerol-3-phosphate dehydrogenase activity. The polypeptide is Glycerol-3-phosphate dehydrogenase [NAD(+)], cytoplasmic (GPD1) (Bos taurus (Bovine)).